A 154-amino-acid polypeptide reads, in one-letter code: Ribonuclease 8 (154 aa).

The signal sequence occupies residues 1–27 (MAPARAGCCPLLLLLLGLWVAEVLVRA). The active-site Proton acceptor is the His-42. Cystine bridges form between Cys-50–Cys-93, Cys-64–Cys-118, Cys-82–Cys-133, and Cys-89–Cys-96. Substrate-binding positions include 65 to 69 (KDLNT) and Lys-90. Catalysis depends on His-149, which acts as the Proton donor.

It belongs to the pancreatic ribonuclease family. In terms of tissue distribution, expressed prominently in the placenta and is not detected in any other tissues examined.

It localises to the secreted. Its function is as follows. Has a low ribonuclease activity. The sequence is that of Ribonuclease 8 (RNASE8) from Homo sapiens (Human).